We begin with the raw amino-acid sequence, 471 residues long: ATP synthase subunit beta (471 aa).

Residue 153 to 160 (GGAGVGKT) coordinates ATP.

The protein belongs to the ATPase alpha/beta chains family. As to quaternary structure, F-type ATPases have 2 components, CF(1) - the catalytic core - and CF(0) - the membrane proton channel. CF(1) has five subunits: alpha(3), beta(3), gamma(1), delta(1), epsilon(1). CF(0) has four main subunits: a(1), b(1), b'(1) and c(9-12).

Its subcellular location is the cell membrane. It catalyses the reaction ATP + H2O + 4 H(+)(in) = ADP + phosphate + 5 H(+)(out). Its function is as follows. Produces ATP from ADP in the presence of a proton gradient across the membrane. The catalytic sites are hosted primarily by the beta subunits. This is ATP synthase subunit beta from Chloroflexus aurantiacus (strain ATCC 29364 / DSM 637 / Y-400-fl).